We begin with the raw amino-acid sequence, 631 residues long: Occlusion-derived virus envelope protein E66 (631 aa).

This sequence belongs to the baculoviridae E66 family.

It localises to the virion membrane. Functionally, component of the polyhedra envelope. This Leucania separata nucleopolyhedrovirus (LsNPV) protein is Occlusion-derived virus envelope protein E66.